The sequence spans 484 residues: D-aminoacylase (484 aa).

The protein belongs to the metallo-dependent hydrolases superfamily. N-acyl-D-amino-acid deacylase family. The cofactor is Zn(2+).

It is found in the cytoplasm. The catalysed reaction is an N-acyl-D-amino acid + H2O = a D-alpha-amino acid + a carboxylate. Functionally, has a wide specificity; hydrolyzes N-acyl derivative of neutral D-amino acids. This is D-aminoacylase (dan) from Alcaligenes xylosoxydans xylosoxydans (Achromobacter xylosoxidans).